The sequence spans 164 residues: Crossover junction endodeoxyribonuclease RuvC (164 aa).

Residues aspartate 7, glutamate 67, and aspartate 139 contribute to the active site. Residues aspartate 7, glutamate 67, and aspartate 139 each contribute to the Mg(2+) site.

Belongs to the RuvC family. Homodimer which binds Holliday junction (HJ) DNA. The HJ becomes 2-fold symmetrical on binding to RuvC with unstacked arms; it has a different conformation from HJ DNA in complex with RuvA. In the full resolvosome a probable DNA-RuvA(4)-RuvB(12)-RuvC(2) complex forms which resolves the HJ. Requires Mg(2+) as cofactor.

It is found in the cytoplasm. The enzyme catalyses Endonucleolytic cleavage at a junction such as a reciprocal single-stranded crossover between two homologous DNA duplexes (Holliday junction).. Its function is as follows. The RuvA-RuvB-RuvC complex processes Holliday junction (HJ) DNA during genetic recombination and DNA repair. Endonuclease that resolves HJ intermediates. Cleaves cruciform DNA by making single-stranded nicks across the HJ at symmetrical positions within the homologous arms, yielding a 5'-phosphate and a 3'-hydroxyl group; requires a central core of homology in the junction. The consensus cleavage sequence is 5'-(A/T)TT(C/G)-3'. Cleavage occurs on the 3'-side of the TT dinucleotide at the point of strand exchange. HJ branch migration catalyzed by RuvA-RuvB allows RuvC to scan DNA until it finds its consensus sequence, where it cleaves and resolves the cruciform DNA. In Geobacter metallireducens (strain ATCC 53774 / DSM 7210 / GS-15), this protein is Crossover junction endodeoxyribonuclease RuvC.